Reading from the N-terminus, the 1202-residue chain is Nucleolar protein 6 (1202 aa).

Residues 1 to 64 (MNKTKRKQQS…KKYKDNETNK (64 aa)) form a disordered region.

This sequence belongs to the NRAP family. In terms of assembly, part of the small subunit (SSU) processome, composed of more than 70 proteins and the RNA chaperone small nucleolar RNA (snoRNA) U3.

The protein resides in the nucleus. It is found in the nucleolus. Its subcellular location is the chromosome. Its function is as follows. Part of the small subunit (SSU) processome, first precursor of the small eukaryotic ribosomal subunit. During the assembly of the SSU processome in the nucleolus, many ribosome biogenesis factors, an RNA chaperone and ribosomal proteins associate with the nascent pre-rRNA and work in concert to generate RNA folding, modifications, rearrangements and cleavage as well as targeted degradation of pre-ribosomal RNA by the RNA exosome. The chain is Nucleolar protein 6 from Drosophila willistoni (Fruit fly).